The primary structure comprises 71 residues: Sec-independent protein translocase protein TatA (71 aa).

Residues 1–21 traverse the membrane as a helical segment; it reads MGSFSMGHWLIVLAIIVLLFG. Positions 41–57 are enriched in basic and acidic residues; it reads KEMEDETPVEKIEKADS. The interval 41 to 71 is disordered; the sequence is KEMEDETPVEKIEKADSETQSTKQNETTKNV. Over residues 58–71 the composition is skewed to polar residues; the sequence is ETQSTKQNETTKNV.

Belongs to the TatA/E family. As to quaternary structure, the Tat system comprises two distinct complexes: a TatABC complex, containing multiple copies of TatA, TatB and TatC subunits, and a separate TatA complex, containing only TatA subunits. Substrates initially bind to the TatABC complex, which probably triggers association of the separate TatA complex to form the active translocon.

It localises to the cell inner membrane. Its function is as follows. Part of the twin-arginine translocation (Tat) system that transports large folded proteins containing a characteristic twin-arginine motif in their signal peptide across membranes. TatA could form the protein-conducting channel of the Tat system. This is Sec-independent protein translocase protein TatA from Campylobacter fetus subsp. fetus (strain 82-40).